The following is a 503-amino-acid chain: Probable cytosol aminopeptidase (503 aa).

Positions 270 and 275 each coordinate Mn(2+). The active site involves Lys-282. Residues Asp-293, Asp-352, and Glu-354 each contribute to the Mn(2+) site. Arg-356 is a catalytic residue.

The protein belongs to the peptidase M17 family. The cofactor is Mn(2+).

It localises to the cytoplasm. The catalysed reaction is Release of an N-terminal amino acid, Xaa-|-Yaa-, in which Xaa is preferably Leu, but may be other amino acids including Pro although not Arg or Lys, and Yaa may be Pro. Amino acid amides and methyl esters are also readily hydrolyzed, but rates on arylamides are exceedingly low.. It carries out the reaction Release of an N-terminal amino acid, preferentially leucine, but not glutamic or aspartic acids.. Presumably involved in the processing and regular turnover of intracellular proteins. Catalyzes the removal of unsubstituted N-terminal amino acids from various peptides. In Salmonella arizonae (strain ATCC BAA-731 / CDC346-86 / RSK2980), this protein is Probable cytosol aminopeptidase.